A 963-amino-acid chain; its full sequence is Thrombospondin-4 (963 aa).

Residues 1–26 (MPAPRAAAAAFLLLHLVLQPWQRTSA) form the signal peptide. One can recognise a Laminin G-like domain in the interval 29–194 (TPQVFDLLPS…LEELKLVVRG (166 aa)). The short motif at 138-140 (RGD) is the Cell attachment site element. Residues 288 to 327 (PTRHCDSSPCFRGVRCTDTRDGFQCGPCPDGYTGNGITCS) form the EGF-like 1 domain. 21 disulfides stabilise this stretch: cysteine 292–cysteine 303, cysteine 297–cysteine 312, cysteine 315–cysteine 326, cysteine 332–cysteine 343, cysteine 337–cysteine 352, cysteine 355–cysteine 379, cysteine 385–cysteine 396, cysteine 390–cysteine 405, cysteine 408–cysteine 420, cysteine 426–cysteine 440, cysteine 434–cysteine 450, cysteine 452–cysteine 463, cysteine 479–cysteine 484, cysteine 489–cysteine 509, cysteine 525–cysteine 545, cysteine 548–cysteine 568, cysteine 584–cysteine 604, cysteine 607–cysteine 627, cysteine 645–cysteine 665, cysteine 685–cysteine 705, and cysteine 721–cysteine 942. The region spanning 328 to 365 (DVDECKYHPCYPGVRCVNLAPGFRCDACPVGFTGPMVQ) is the EGF-like 2; calcium-binding domain. The 38-residue stretch at 381 to 418 (DVDECQNGACVLNSICINTLGSYRCGPCKPGYTGDQTR) folds into the EGF-like 3; calcium-binding domain. One can recognise an EGF-like 4 domain in the interval 422 to 464 (TERSCRNPEQNPCSVHAQCIEERQGDVTCVCGVGWAGDGYVCG). TSP type-3 repeat units follow at residues 465 to 497 (KDVD…NSGQ), 498 to 533 (EDAD…NIDQ), 534 to 556 (RNSD…NNDQ), 557 to 592 (KDTD…NRDQ), 593 to 615 (QDRD…NPNQ), 616 to 653 (SDVD…NSSQ), 654 to 693 (LDTD…NPAQ), and 694 to 729 (EDSN…EITL). A Cell attachment site motif is present at residues 564 to 566 (RGD). Residues 579-676 (NILDNCPRVP…DDDDNDGIPD (98 aa)) form a disordered region. 2 N-linked (GlcNAc...) asparagine glycosylation sites follow: asparagine 614 and asparagine 650. Over residues 642–654 (TDNCPTVINSSQL) the composition is skewed to polar residues. Over residues 662–673 (GDECDDDDDNDG) the composition is skewed to acidic residues. Residues 733–947 (RAYQTVVLDP…LKYRCNDTIP (215 aa)) enclose the TSP C-terminal domain. Asparagine 943 is a glycosylation site (N-linked (GlcNAc...) asparagine).

This sequence belongs to the thrombospondin family. Homopentamer; disulfide-linked. Interacts with PTBP3. Interacts (via EGF-like 3; calcium-binding domain) with ATF6 and facilitates its processing, activation and nuclear translocation. Interacts with NOTCH1. As to expression, heart. Up-regulated in the heart in response to ischemic injury and pathology (at protein level). Astrocytes; expressed at high levels in subventricular zone (SVZ)-derived astrocytes and at low levels in cortical astrocytes. In response to peripheral nerve injury, significantly up-regulated in the dorsal spinal cord (at protein level).

It is found in the endoplasmic reticulum. It localises to the sarcoplasmic reticulum. The protein resides in the secreted. The protein localises to the extracellular space. Its subcellular location is the extracellular matrix. Its function is as follows. Adhesive glycoprotein that mediates cell-to-cell and cell-to-matrix interactions and is involved in various processes including cellular proliferation, migration, adhesion and attachment, inflammatory response to CNS injury, regulation of vascular inflammation and adaptive responses of the heart to pressure overload and in myocardial function and remodeling. Binds to structural extracellular matrix (ECM) proteins and modulates the ECM in response to tissue damage, contributing to cardioprotective and adaptive ECM remodeling. Plays a role in ER stress response, via its interaction with the activating transcription factor 6 alpha (ATF6) which produces adaptive ER stress response factors and protects myocardium from pressure overload. May contribute to spinal presynaptic hypersensitivity and neuropathic pain states after peripheral nerve injury. May play a role in regulating protective astrogenesis from the subventricular zone (SVZ) niche after injury in a NOTCH1-dependent manner. The chain is Thrombospondin-4 (Thbs4) from Mus musculus (Mouse).